Consider the following 220-residue polypeptide: Probable pterin-4-alpha-carbinolamine dehydratase, chloroplastic (220 aa).

The N-terminal 50 residues, 1 to 50 (MAATSSSPPCNISASSLLLRQPSRSILKVFGLLPPVSRNNRKLGRLTVTR), are a transit peptide targeting the chloroplast.

This sequence belongs to the pterin-4-alpha-carbinolamine dehydratase family. As to quaternary structure, interacts with SDIR1. Interacts with AIRP2. In terms of processing, ubiquitinated by SDIR1. Ubiquitination leads to its subsequent degradation, thus controlling abscisic acid (ABA) signaling. Ubiquitinated by AIRP2. Ubiquitination leads to its subsequent degradation, thus controlling abscisic acid (ABA) signaling during drought stress.

Its subcellular location is the plastid. It localises to the chloroplast. The protein resides in the cell membrane. The protein localises to the nucleus. It catalyses the reaction (4aS,6R)-4a-hydroxy-L-erythro-5,6,7,8-tetrahydrobiopterin = (6R)-L-erythro-6,7-dihydrobiopterin + H2O. Its function is as follows. Involved in tetrahydrobiopterin biosynthesis. Interacts with and acts downstream of the E3 ubiquitin-protein ligase SDIR1 in abscisic acid (ABA) and salt stress signaling. Regulates the expression of the bZIP transcription factor ABI5, which mediates responses to ABA during seed germination and salt stress. The SDIR1-ATP1/SDIRIP1 complex plays an important role in ABA signaling through the ubiquitination pathway. Acts downstream of AIRP2 in regulation of ABA signaling during drought stress. This Arabidopsis thaliana (Mouse-ear cress) protein is Probable pterin-4-alpha-carbinolamine dehydratase, chloroplastic.